The chain runs to 334 residues: Terpene synthase 1 (334 aa).

Mg(2+) contacts are provided by Asp-82 and Asp-86. The D(D/E)XX(D/E) motif signature appears at 82 to 86 (DDIFD). Arg-184 provides a ligand contact to substrate. Positions 230, 234, and 238 each coordinate Mg(2+). An NSE motif motif is present at residues 230-238 (NDIYSYHRE). Positions 309–316 (WSESCTRY) match the WxxxxxRY motif motif.

Belongs to the terpene synthase family. Mg(2+) serves as cofactor.

The catalysed reaction is (2E,6E)-farnesyl diphosphate = gamma-muurolene + diphosphate. The enzyme catalyses (2E,6E)-farnesyl diphosphate = alpha-muurolene + diphosphate. It catalyses the reaction (2E,6E)-farnesyl diphosphate = (-)-(E)-beta-caryophyllene + diphosphate. It carries out the reaction (2E)-geranyl diphosphate = beta-myrcene + diphosphate. In terms of biological role, terpene synthase that catalyzes the cyclization of farnesyl diphosphate (FPP) into a mixture of sesquiterpenes with gamma-muurolene as the most abundant compound and (-)-beta-caryophyllene, alpha-muurolene, and 4 unidentified sesquiterpenes as minor compoundss. TPS1 also shows monoterpene synthase activity and can also use geranyl diphosphate (GPP) as a substrate to convert it into a mixture of cyclic and acyclic monoterpenes, including myrcene and linalool. P.polycephalum has a unique biology and these volatile terpenoids could function in internal communication of P.polycephalum, to mark the territory that have been explored, or they may be involved in chemotaxis. The chain is Terpene synthase 1 from Physarum polycephalum (Slime mold).